The chain runs to 302 residues: Tyrosine recombinase XerC (302 aa).

The Core-binding (CB) domain occupies 2 to 89 (QPLMEQIRAF…AIRSFYRHLL (88 aa)). Residues 110 to 289 (RLPFHLDIDQ…SLDRLMEVYD (180 aa)) enclose the Tyr recombinase domain. Active-site residues include R150, K174, H241, R244, and H267. Y276 acts as the O-(3'-phospho-DNA)-tyrosine intermediate in catalysis.

This sequence belongs to the 'phage' integrase family. XerC subfamily. As to quaternary structure, forms a cyclic heterotetrameric complex composed of two molecules of XerC and two molecules of XerD.

The protein localises to the cytoplasm. Functionally, site-specific tyrosine recombinase, which acts by catalyzing the cutting and rejoining of the recombining DNA molecules. The XerC-XerD complex is essential to convert dimers of the bacterial chromosome into monomers to permit their segregation at cell division. It also contributes to the segregational stability of plasmids. This Pelobacter propionicus (strain DSM 2379 / NBRC 103807 / OttBd1) protein is Tyrosine recombinase XerC.